The sequence spans 354 residues: Glutamine synthetase (354 aa).

In terms of domain architecture, GS beta-grasp spans 22–101; sequence IQAEYVWVDG…VLAETYNSDG (80 aa). A GS catalytic domain is found at 108–354; that stretch reads FRHHAAKVME…IIVETTLLNA (247 aa).

This sequence belongs to the glutamine synthetase family. In terms of assembly, homooctamer.

It localises to the cytoplasm. The enzyme catalyses L-glutamate + NH4(+) + ATP = L-glutamine + ADP + phosphate + H(+). This is Glutamine synthetase (GLN1) from Hebeloma cylindrosporum.